The chain runs to 320 residues: Cytochrome f (320 aa).

The first 35 residues, 1 to 35 (MQTRNTFSWIREEITRSISVSLMIYIITWASISSA), serve as a signal peptide directing secretion. 4 residues coordinate heme: Tyr36, Cys56, Cys59, and His60. Residues 286–305 (VQGLLFFLGSVVLAQIFLVL) traverse the membrane as a helical segment.

The protein belongs to the cytochrome f family. As to quaternary structure, the 4 large subunits of the cytochrome b6-f complex are cytochrome b6, subunit IV (17 kDa polypeptide, petD), cytochrome f and the Rieske protein, while the 4 small subunits are PetG, PetL, PetM and PetN. The complex functions as a dimer. Heme is required as a cofactor. Post-translationally, purified from leaves as a water-soluble monomeric protein with a mass of 28.16 kDa, cleavage occurs after Gln-287 and separates the heme-binding from the membrane.

It is found in the plastid. It localises to the chloroplast thylakoid membrane. Functionally, component of the cytochrome b6-f complex, which mediates electron transfer between photosystem II (PSII) and photosystem I (PSI), cyclic electron flow around PSI, and state transitions. This is Cytochrome f (petA) from Brassica rapa subsp. rapa (Turnip).